A 517-amino-acid chain; its full sequence is Amidophosphoribosyltransferase (517 aa).

M1 carries the N-acetylmethionine modification. Residues 1 to 11 constitute a propeptide that is removed on maturation; the sequence is MELEESGIREE. The Nucleophile role is filled by C12. One can recognise a Glutamine amidotransferase type-2 domain in the interval 12–261; that stretch reads CGVFGCIASG…PGEIVEISRH (250 aa). C280 serves as a coordination point for [4Fe-4S] cluster. S327, D389, and D390 together coordinate Mg(2+). The [4Fe-4S] cluster site is built by C426, C503, and C506.

In the C-terminal section; belongs to the purine/pyrimidine phosphoribosyltransferase family. Homotetramer. Mg(2+) serves as cofactor. Requires [4Fe-4S] cluster as cofactor. As to expression, expressed at a high level in brain, heart, liver and stomach.

The enzyme catalyses 5-phospho-beta-D-ribosylamine + L-glutamate + diphosphate = 5-phospho-alpha-D-ribose 1-diphosphate + L-glutamine + H2O. Its pathway is purine metabolism; IMP biosynthesis via de novo pathway; N(1)-(5-phospho-D-ribosyl)glycinamide from 5-phospho-alpha-D-ribose 1-diphosphate: step 1/2. Activated by the substrate 5-phospho-alpha-D-ribosyl-1-pyrophosphate and inhibited by the purine ribonucleotides, the end products of purine biosynthesis. Catalyzes the formation of phosphoribosylamine from phosphoribosylpyrophosphate (PRPP) and glutamine. The sequence is that of Amidophosphoribosyltransferase (Ppat) from Rattus norvegicus (Rat).